Here is a 320-residue protein sequence, read N- to C-terminus: Lipoyl synthase (320 aa).

Residues Cys-67, Cys-72, Cys-78, Cys-93, Cys-97, Cys-100, and Ser-307 each contribute to the [4Fe-4S] cluster site. One can recognise a Radical SAM core domain in the interval 79-296; that stretch reads FNHGTATFMI…REKAAEMGFE (218 aa).

The protein belongs to the radical SAM superfamily. Lipoyl synthase family. Requires [4Fe-4S] cluster as cofactor.

Its subcellular location is the cytoplasm. It carries out the reaction [[Fe-S] cluster scaffold protein carrying a second [4Fe-4S](2+) cluster] + N(6)-octanoyl-L-lysyl-[protein] + 2 oxidized [2Fe-2S]-[ferredoxin] + 2 S-adenosyl-L-methionine + 4 H(+) = [[Fe-S] cluster scaffold protein] + N(6)-[(R)-dihydrolipoyl]-L-lysyl-[protein] + 4 Fe(3+) + 2 hydrogen sulfide + 2 5'-deoxyadenosine + 2 L-methionine + 2 reduced [2Fe-2S]-[ferredoxin]. Its pathway is protein modification; protein lipoylation via endogenous pathway; protein N(6)-(lipoyl)lysine from octanoyl-[acyl-carrier-protein]: step 2/2. In terms of biological role, catalyzes the radical-mediated insertion of two sulfur atoms into the C-6 and C-8 positions of the octanoyl moiety bound to the lipoyl domains of lipoate-dependent enzymes, thereby converting the octanoylated domains into lipoylated derivatives. The chain is Lipoyl synthase from Actinobacillus succinogenes (strain ATCC 55618 / DSM 22257 / CCUG 43843 / 130Z).